Consider the following 249-residue polypeptide: 3alpha-hydroxy bile acid-CoA-ester 3-dehydrogenase 1/3 (249 aa).

NAD(+) is bound by residues 15 to 18 (TRGI), glutamate 38, glutamate 42, and asparagine 92. Serine 144 contributes to the substrate binding site. Residues tyrosine 157 and lysine 161 each act as proton donor/acceptor in the active site. Residues lysine 161 and 190–192 (VDT) each bind NAD(+).

The protein belongs to the short-chain dehydrogenases/reductases (SDR) family. Homotetramer.

The enzyme catalyses a 3alpha-hydroxy bile acid CoA + NAD(+) = a 3-oxo bile acid CoA + NADH + H(+). The catalysed reaction is choloyl-CoA + NAD(+) = 7alpha,12alpha-dihydroxy-3-oxochol-24-oyl-CoA + NADH + H(+). It catalyses the reaction chenodeoxycholoyl-CoA + NAD(+) = 7alpha-hydroxy-3-oxochol-24-oyl-CoA + NADH + H(+). It carries out the reaction deoxycholoyl-CoA + NAD(+) = 12alpha-hydroxy-3-oxocholan-24-oyl-CoA + NADH + H(+). The enzyme catalyses lithocholoyl-CoA + NAD(+) = 3-oxocholan-24-oyl-CoA + NADH + H(+). It participates in lipid metabolism; bile acid biosynthesis. Its function is as follows. Involved in the multi-step bile acid 7alpha-dehydroxylation pathway that transforms primary bile acids to secondary bile acids in the human gut. Catalyzes the oxidation of C3-hydroxyl group of CoA conjugated bile acids generating a C3-oxo bile acid intermediate. Can use choloyl-CoA, chenodeoxycholoyl-CoA, deoxycholoyl-CoA, and lithocholoyl-CoA as substrates with similar efficiency. Highly prefers NAD over NADP as cosubstrate. Also catalyzes the reverse reactions; in vitro, the preferred direction of reaction depends on the pH. Has very little activity with unconjugated (non-CoA) bile acid substrates. The protein is 3alpha-hydroxy bile acid-CoA-ester 3-dehydrogenase 1/3 (baiA1) of Clostridium scindens (strain JCM 10418 / VPI 12708).